The chain runs to 431 residues: Teosinte glume architecture 1 (431 aa).

Disordered regions lie at residues 18 to 55 (QDHAAAAPSSGGHAANAAAAGTGTESRPPAPGAAGAPA) and 68 to 102 (ECEPGAARREREAAAGAAKRPRPAGPGGQQQQQCP). Residues 21 to 41 (AAAAPSSGGHAANAAAAGTGT) show a composition bias toward low complexity. The SBP-type zinc-finger motif lies at 101–178 (CPSCAVDGCR…DGHNRRRRKP (78 aa)). Zn(2+)-binding residues include C104, C109, C126, H129, C145, C148, H152, and C164. Residues 408–419 (GGGSGGGEGSSD) are compositionally biased toward gly residues. The disordered stretch occupies residues 408 to 431 (GGGSGGGEGSSDGGTSSSMPFSWQ).

In terms of assembly, monomer and homodimer. In terms of tissue distribution, strongly expressed in immature ears and weakly in husks. Found in the inflorescence meristem of the developing ear, in the spikelet pair primordia, the glume primordia, the cupule forming region and other floral organs. Not detected in other tissues.

Functionally, SBP transcriptional regulator probably involved in the domestication of maize. Acts as a transcriptional repressor binding to a 5'-GTAC-3' motif. May repress the growth of lateral branches in length and numbers. This chain is Teosinte glume architecture 1, found in Zea mays (Maize).